The primary structure comprises 232 residues: Ubiquitin carboxyl-terminal hydrolase UCHL3 (232 aa).

Residues 6 to 225 enclose the UCH catalytic domain; sequence IWTPLESNPD…LRFSALAVIP (220 aa). Residues 10-14 are interaction with ubiquitin; the sequence is LESNP. C92 (nucleophile) is an active-site residue. The tract at residues 151–159 is crossover loop which restricts access of large ubiquitin adducts to the active site; that stretch reads QVENRDDIL. The interaction with ubiquitin stretch occupies residues 163 to 165; that stretch reads THF. Residue H164 is the Proton donor of the active site.

The protein belongs to the peptidase C12 family.

It carries out the reaction Thiol-dependent hydrolysis of ester, thioester, amide, peptide and isopeptide bonds formed by the C-terminal Gly of ubiquitin (a 76-residue protein attached to proteins as an intracellular targeting signal).. Thiol protease that recognizes and hydrolyzes a peptide bond at the C-terminal glycine of either ubiquitin or NEDD8. Essential for parasite blood stage survival. The polypeptide is Ubiquitin carboxyl-terminal hydrolase UCHL3 (Plasmodium falciparum (isolate 3D7)).